The following is a 493-amino-acid chain: Serine/threonine-protein kinase 3 (493 aa).

A Protein kinase domain is found at Phe-26–Ile-277. Residues Leu-32–Val-40 and Lys-55 each bind ATP. Asp-145 acts as the Proton acceptor in catalysis. A Phosphothreonine; by autocatalysis modification is found at Thr-179. A coiled-coil region spans residues Leu-286 to Lys-327. Disordered regions lie at residues Glu-303–Met-336 and Asp-369–Gln-414. Over residues Leu-308–Leu-320 the composition is skewed to acidic residues. Residues Met-325–Met-336 are compositionally biased toward polar residues. Residues Asp-369 to Asp-378 are compositionally biased toward acidic residues. Basic and acidic residues predominate over residues Tyr-398–Asp-410. The 48-residue stretch at Phe-439 to Lys-486 folds into the SARAH domain. Residues Asn-444–Gln-477 adopt a coiled-coil conformation.

This sequence belongs to the protein kinase superfamily. STE Ser/Thr protein kinase family. STE20 subfamily. As to quaternary structure, homodimer; mediated via the coiled-coil region. Mg(2+) is required as a cofactor.

The protein resides in the cytoplasm. The protein localises to the nucleus. The catalysed reaction is L-seryl-[protein] + ATP = O-phospho-L-seryl-[protein] + ADP + H(+). The enzyme catalyses L-threonyl-[protein] + ATP = O-phospho-L-threonyl-[protein] + ADP + H(+). With respect to regulation, inhibited by the C-terminal non-catalytic region. Activated by caspase-cleavage. Full activation also requires homodimerization and autophosphorylation of Thr-179. In terms of biological role, stress-activated, pro-apoptotic kinase which, following caspase-cleavage, enters the nucleus and induces chromatin condensation followed by internucleosomal DNA fragmentation. Key component of the Hippo signaling pathway which plays a pivotal role in organ size control and tumor suppression by restricting proliferation and promoting apoptosis. The core of this pathway is composed of a kinase cascade wherein stk3/mst2 and stk4/mst1, in complex with its regulatory protein sav1, phosphorylates and activates lats1/2 in complex with its regulatory protein mob1, which in turn phosphorylates and inactivates yap1 oncoprotein and wwtr1/taz. Phosphorylation of yap1 by lats2 inhibits its translocation into the nucleus to regulate cellular genes important for cell proliferation, cell death, and cell migration. This Xenopus laevis (African clawed frog) protein is Serine/threonine-protein kinase 3 (stk3).